Here is a 333-residue protein sequence, read N- to C-terminus: DNA-directed RNA polymerase subunit alpha (333 aa).

The tract at residues 1-233 (MVREKIRVST…DLFIPFLHAE (233 aa)) is alpha N-terminal domain (alpha-NTD). Residues 269 to 333 (IALKYIFIDQ…DILEMEKNFA (65 aa)) form an alpha C-terminal domain (alpha-CTD) region.

Belongs to the RNA polymerase alpha chain family. In terms of assembly, in plastids the minimal PEP RNA polymerase catalytic core is composed of four subunits: alpha, beta, beta', and beta''. When a (nuclear-encoded) sigma factor is associated with the core the holoenzyme is formed, which can initiate transcription.

Its subcellular location is the plastid. The protein localises to the chloroplast. It carries out the reaction RNA(n) + a ribonucleoside 5'-triphosphate = RNA(n+1) + diphosphate. In terms of biological role, DNA-dependent RNA polymerase catalyzes the transcription of DNA into RNA using the four ribonucleoside triphosphates as substrates. This Cucumis sativus (Cucumber) protein is DNA-directed RNA polymerase subunit alpha.